Reading from the N-terminus, the 391-residue chain is Phosphoglycerate kinase (391 aa).

Substrate contacts are provided by residues 21-23, Arg36, 59-62, Arg113, and Arg146; these read DLN and HLGR. Residues Lys197, Glu319, and 345–348 contribute to the ATP site; that span reads GGDT.

Belongs to the phosphoglycerate kinase family. In terms of assembly, monomer.

It is found in the cytoplasm. It carries out the reaction (2R)-3-phosphoglycerate + ATP = (2R)-3-phospho-glyceroyl phosphate + ADP. The protein operates within carbohydrate degradation; glycolysis; pyruvate from D-glyceraldehyde 3-phosphate: step 2/5. This Stenotrophomonas maltophilia (strain K279a) protein is Phosphoglycerate kinase.